The primary structure comprises 277 residues: Putative thiosulfate sulfurtransferase (277 aa).

Rhodanese domains lie at 18–125 (KAPK…PLSA) and 154–274 (AIGT…APIE). Lys67 is covalently cross-linked (Isoglutamyl lysine isopeptide (Lys-Gln) (interchain with Q-Cter in protein Pup)). The Cysteine persulfide intermediate role is filled by Cys233. Arg238 is a substrate binding site.

The catalysed reaction is thiosulfate + hydrogen cyanide = thiocyanate + sulfite + 2 H(+). Functionally, may be a sulfotransferase involved in the formation of thiosulfate. The chain is Putative thiosulfate sulfurtransferase from Mycolicibacterium smegmatis (strain ATCC 700084 / mc(2)155) (Mycobacterium smegmatis).